Consider the following 760-residue polypeptide: Probable ATP-dependent RNA helicase DDX27 (760 aa).

The disordered stretch occupies residues 1–50; sequence MLAELGFIRTIGENDEVPVEPESDSGDEEEEGPIVLGRKQKALQKNRSAD. Positions 13-32 are enriched in acidic residues; it reads ENDEVPVEPESDSGDEEEEG. A phosphoserine mark is found at S23, S25, and S48. The Required for interaction with the PEBOW complex signature appears at 55 to 57; it reads FVF. A disordered region spans residues 80 to 149; sequence KRAATTLDEK…TDYSSEDEEI (70 aa). Basic and acidic residues predominate over residues 98–122; it reads KAEDKEAKSGKVEEKEGQADSDLKG. A compositionally biased stretch (acidic residues) spans 126-148; the sequence is PGEDEAGSKDEDSETDYSSEDEE. Phosphoserine occurs at positions 133 and 144. The short motif at 157–166 is the Nuclear localization signal element; it reads KVKEKKKKKK. Residues 184 to 212 carry the Q motif motif; it reads LSFQDMNLSRPLLKAITAMGFKQPTPIQK. A Helicase ATP-binding domain is found at 215–389; it reads IPVGLLGKDI…SVSLKNPVRI (175 aa). An ATP-binding site is contributed by 228–235; that stretch reads AATGTGKT. The DEAD box motif lies at 337–340; it reads DEAD. The region spanning 419–569 is the Helicase C-terminal domain; sequence IVAALLMRTF…DVILKFRDKI (151 aa). Disordered stretches follow at residues 605–624 and 679–760; these read KGKETADQEPERSWFQTKEE and RLAK…KRKK. Basic residues-rich tracts occupy residues 682 to 691 and 744 to 760; these read KRNRRTKRAR and RQRRGNFKSKSRYKRKK.

Belongs to the DEAD box helicase family. DDX27/DRS1 subfamily. As to quaternary structure, associates with PeBoW complex, composed of BOP1, PES1 and WDR12. Interacts directly with BOP1 and PES1.

The protein localises to the nucleus. Its subcellular location is the nucleolus. It is found in the chromosome. It carries out the reaction ATP + H2O = ADP + phosphate + H(+). Its function is as follows. Probable ATP-dependent RNA helicase. Component of the nucleolar ribosomal RNA (rRNA) processing machinery that regulates 3' end formation of ribosomal 47S rRNA. The protein is Probable ATP-dependent RNA helicase DDX27 (Ddx27) of Mus musculus (Mouse).